The chain runs to 80 residues: Reactive oxygen species modulator 1 (80 aa).

Residues 22-44 (MGFMMGFAVGMAAGAMFGTFSCL) traverse the membrane as a helical segment. Residues 42 to 60 (SCLRIGMRGRELMGGVGKT) form a sufficient for antibacterial activity region.

This sequence belongs to the MGR2 family.

Its subcellular location is the mitochondrion inner membrane. Has antibacterial activity against a variety of bacteria including S.aureus, P.aeruginosa and M.tuberculosis. Acts by inducing bacterial membrane breakage. Functionally, induces production of reactive oxygen species (ROS) which are necessary for cell proliferation. May play a role in inducing oxidative DNA damage and replicative senescence. May play a role in the coordination of mitochondrial morphology and cell proliferation. This is Reactive oxygen species modulator 1 (romo1) from Danio rerio (Zebrafish).